Reading from the N-terminus, the 342-residue chain is Platelet-activating factor receptor (342 aa).

Topologically, residues 1-16 (MEPHDSSHMDSEFRYT) are extracellular. The chain crosses the membrane as a helical span at residues 17–38 (LFPIVYSIIFVLGVIANGYVLW). Residues 39–54 (VFARLYPCKKFNEIKI) are Cytoplasmic-facing. Residues 55–74 (FMVNLTMADMLFLITLPLWI) form a helical membrane-spanning segment. Topologically, residues 75–91 (VYYQNQGNWILPKFLCN) are extracellular. A disulfide bridge links cysteine 90 with cysteine 173. A helical membrane pass occupies residues 92–113 (VAGCLFFINTYCSVAFLGVITY). The Cytoplasmic portion of the chain corresponds to 114–133 (NRFQAVTRPIKTAQANTRKR). Residues 134–155 (GISLSLVIWVAIVGAASYFLIL) form a helical membrane-spanning segment. The Extracellular portion of the chain corresponds to 156–184 (DSTNTVPDSAGSGNVTRCFEHYEKGSVPV). N-linked (GlcNAc...) asparagine glycosylation occurs at asparagine 169. Residues 185–205 (LIIHIFIVFSFFLVFLIILFC) traverse the membrane as a helical segment. Residues 206–233 (NLVIIRTLLMQPVQQQRNAEVKRRALWM) lie on the Cytoplasmic side of the membrane. Residues 234–254 (VCTVLAVFIICFVPHHVVQLP) form a helical membrane-spanning segment. At 255–276 (WTLAELGFQDSKFHQAINDAHQ) the chain is on the extracellular side. A helical transmembrane segment spans residues 277–296 (VTLCLLSTNCVLDPVIYCFL). The Cytoplasmic portion of the chain corresponds to 297-342 (TKKFRKHLTEKFYSMRSSRKCSRATTDTVTEVVVPFNQIPGNSLKN).

Belongs to the G-protein coupled receptor 1 family. In terms of assembly, interacts with ARRB1. As to expression, expressed in the placenta, lung, left and right heart ventricles, heart atrium, leukocytes and differentiated HL-60 granulocytes.

The protein localises to the cell membrane. Functionally, receptor for platelet activating factor, a chemotactic phospholipid mediator that possesses potent inflammatory, smooth-muscle contractile and hypotensive activity. Seems to mediate its action via a G protein that activates a phosphatidylinositol-calcium second messenger system. In Homo sapiens (Human), this protein is Platelet-activating factor receptor (PTAFR).